A 429-amino-acid chain; its full sequence is Enolase (429 aa).

A (2R)-2-phosphoglycerate-binding site is contributed by Q163. The active-site Proton donor is the E205. Positions 242, 286, and 313 each coordinate Mg(2+). Positions 338, 367, 368, and 389 each coordinate (2R)-2-phosphoglycerate. The active-site Proton acceptor is the K338.

Belongs to the enolase family. Mg(2+) is required as a cofactor.

The protein resides in the cytoplasm. It localises to the secreted. The protein localises to the cell surface. The enzyme catalyses (2R)-2-phosphoglycerate = phosphoenolpyruvate + H2O. The protein operates within carbohydrate degradation; glycolysis; pyruvate from D-glyceraldehyde 3-phosphate: step 4/5. In terms of biological role, catalyzes the reversible conversion of 2-phosphoglycerate (2-PG) into phosphoenolpyruvate (PEP). It is essential for the degradation of carbohydrates via glycolysis. This is Enolase from Pelobacter propionicus (strain DSM 2379 / NBRC 103807 / OttBd1).